A 593-amino-acid polypeptide reads, in one-letter code: Cyclin-dependent kinase-like 3 (593 aa).

In terms of domain architecture, Protein kinase spans 4–286; it reads YETLGKVGEG…STDLLHHDYF (283 aa). ATP contacts are provided by residues 10–18 and Lys33; that span reads VGEGSYGTV. Residues 45 to 51 carry the [NKR]KIAxRE motif; that stretch reads KIATREI. Asp125 functions as the Proton acceptor in the catalytic mechanism. A Phosphothreonine modification is found at Thr158. Phosphotyrosine is present on Tyr160. Over residues 368-403 the composition is skewed to basic and acidic residues; that stretch reads GKGDVPDLKKTESEGEHRQQGTAEDTHPTSLDRKPS. A disordered region spans residues 368 to 512; sequence GKGDVPDLKK…NDQIASGNKR (145 aa). Residues 436-452 are compositionally biased toward low complexity; sequence NLTSSNLLAANPSSNLS. 2 stretches are compositionally biased toward polar residues: residues 468 to 491 and 499 to 508; these read SSQTIGQTLSNSRQEDTGPTQVQT and RTGQNDQIAS.

The protein belongs to the protein kinase superfamily. CMGC Ser/Thr protein kinase family. CDC2/CDKX subfamily. As to expression, highly expressed in brain, and to a lower extent in heart and testis.

Its subcellular location is the nucleus. It localises to the cytoplasm. The enzyme catalyses L-seryl-[protein] + ATP = O-phospho-L-seryl-[protein] + ADP + H(+). The catalysed reaction is L-threonyl-[protein] + ATP = O-phospho-L-threonyl-[protein] + ADP + H(+). This is Cyclin-dependent kinase-like 3 from Rattus norvegicus (Rat).